The following is a 370-amino-acid chain: Protein DVU_0535 (370 aa).

Topologically, residues 1–258 are cytoplasmic; it reads MDRRRFLTLL…EELGTKSAPE (258 aa). 4Fe-4S ferredoxin-type domains lie at 40-70, 101-132, and 133-162; these read YGVL…APKA, DHPV…KNPD, and GSVT…FQYA. Residues cysteine 49, cysteine 52, cysteine 55, cysteine 59, cysteine 110, cysteine 113, cysteine 118, cysteine 122, cysteine 142, cysteine 145, cysteine 148, cysteine 152, cysteine 172, cysteine 175, cysteine 187, and cysteine 191 each coordinate [4Fe-4S] cluster. Residues 259 to 284 form a helical membrane-spanning segment; it reads YTAGALGAVPMVVGIWPILLTGAYAI. Topologically, residues 285–370 are periplasmic; it reads TKRKEKIAAE…DDAGKPGEDA (86 aa). Basic and acidic residues predominate over residues 345–355; that stretch reads FEEELAAKEQP. The tract at residues 345 to 370 is disordered; sequence FEEELAAKEQPEAPEGDDAGKPGEDA.

It localises to the cell membrane. In terms of biological role, HMWC (high-molecular-weight cytochrome c precursor), ORF2, ORF3, ORF4, ORF5, ORF6 in the HMC operon form a transmembrane protein complex that allows electron flow from the periplasmic hydrogenase to the cytoplasmic enzymes that catalyze reduction of sulfates. ORF2 is a transmembrane redox protein. In Nitratidesulfovibrio vulgaris (strain ATCC 29579 / DSM 644 / CCUG 34227 / NCIMB 8303 / VKM B-1760 / Hildenborough) (Desulfovibrio vulgaris), this protein is Protein DVU_0535.